We begin with the raw amino-acid sequence, 585 residues long: ATP-dependent lipid A-core flippase (585 aa).

5 consecutive transmembrane segments (helical) span residues 24-44, 65-85, 143-163, 165-185, and 253-273; these read LWKV…ASAA, LLVP…SFCG, ITVV…MIYV, WKLT…IGYV, and PIIQ…ALSP. The ABC transmembrane type-1 domain maps to 29–310; that stretch reads ALAVLGNVIY…LTEVNAVIQR (282 aa). The ABC transporter domain occupies 342–578; sequence LEFKSLGFAY…DGAYAALHKL (237 aa). ATP is bound at residue 376–383; the sequence is GRSGSGKS.

The protein belongs to the ABC transporter superfamily. Lipid exporter (TC 3.A.1.106) family. In terms of assembly, homodimer.

The protein localises to the cell inner membrane. It carries out the reaction ATP + H2O + lipid A-core oligosaccharideSide 1 = ADP + phosphate + lipid A-core oligosaccharideSide 2.. Functionally, involved in lipopolysaccharide (LPS) biosynthesis. Translocates lipid A-core from the inner to the outer leaflet of the inner membrane. Transmembrane domains (TMD) form a pore in the inner membrane and the ATP-binding domain (NBD) is responsible for energy generation. The polypeptide is ATP-dependent lipid A-core flippase (Hahella chejuensis (strain KCTC 2396)).